Here is a 277-residue protein sequence, read N- to C-terminus: Shikimate dehydrogenase (NADP(+)) (277 aa).

Shikimate-binding positions include 15-17 (SKS) and threonine 62. The active-site Proton acceptor is lysine 66. Residue glutamate 78 participates in NADP(+) binding. The shikimate site is built by asparagine 87 and aspartate 103. Residues 127–131 (GAGGA), 151–156 (NRTHEK), and glycine 238 each bind NADP(+).

This sequence belongs to the shikimate dehydrogenase family. In terms of assembly, homodimer.

It carries out the reaction shikimate + NADP(+) = 3-dehydroshikimate + NADPH + H(+). It participates in metabolic intermediate biosynthesis; chorismate biosynthesis; chorismate from D-erythrose 4-phosphate and phosphoenolpyruvate: step 4/7. In terms of biological role, involved in the biosynthesis of the chorismate, which leads to the biosynthesis of aromatic amino acids. Catalyzes the reversible NADPH linked reduction of 3-dehydroshikimate (DHSA) to yield shikimate (SA). The protein is Shikimate dehydrogenase (NADP(+)) of Shewanella frigidimarina (strain NCIMB 400).